We begin with the raw amino-acid sequence, 219 residues long: Transcriptional regulatory protein QseB (219 aa).

Residues 2 to 116 (RILLIEDDML…EVAARLEALM (115 aa)) form the Response regulatory domain. Residue Asp-51 is modified to 4-aspartylphosphate. The ompR/PhoB-type DNA-binding region spans 124–218 (SNELRHGNVM…VHGIGYTLGE (95 aa)).

Phosphorylated by QseC.

Its subcellular location is the cytoplasm. In terms of biological role, member of a two-component regulatory system QseB/QseC. Activates the flagella regulon by activating transcription of FlhDC. Currently it is not known whether this effect is direct or not. The sequence is that of Transcriptional regulatory protein QseB (qseB) from Escherichia coli O157:H7.